Consider the following 852-residue polypeptide: Beta-galactosidase 8 (852 aa).

Positions 1–29 are cleaved as a signal peptide; it reads MEIAAKMVKVRKMEMILLLILVIVVAATA. N-linked (GlcNAc...) asparagine glycosylation is present at Asn31. Residue Glu188 is the Proton donor of the active site. Glu257 serves as the catalytic Nucleophile. N-linked (GlcNAc...) asparagine glycosylation is found at Asn258, Asn475, Asn766, and Asn807. Residues 766-852 enclose the SUEL-type lectin domain; the sequence is NRTRPVLSLK…KSLAVEASCS (87 aa).

The protein belongs to the glycosyl hydrolase 35 family. In terms of tissue distribution, expressed in roots, flowers and siliques.

Its subcellular location is the secreted. The protein localises to the extracellular space. The protein resides in the apoplast. The enzyme catalyses Hydrolysis of terminal non-reducing beta-D-galactose residues in beta-D-galactosides.. The chain is Beta-galactosidase 8 (BGAL8) from Arabidopsis thaliana (Mouse-ear cress).